The sequence spans 508 residues: GMP synthase [glutamine-hydrolyzing] (508 aa).

A Glutamine amidotransferase type-1 domain is found at 1 to 189; that stretch reads MIVVLDFGSQ…ALLVCGCEKT (189 aa). The active-site Nucleophile is the cysteine 78. Residues histidine 163 and glutamate 165 contribute to the active site. The GMPS ATP-PPase domain maps to 190 to 383; it reads WGMQNFAQKE…LGVSQDFLMR (194 aa). Position 217 to 223 (217 to 223) interacts with ATP; the sequence is SGGVDST.

In terms of assembly, homodimer.

It carries out the reaction XMP + L-glutamine + ATP + H2O = GMP + L-glutamate + AMP + diphosphate + 2 H(+). The protein operates within purine metabolism; GMP biosynthesis; GMP from XMP (L-Gln route): step 1/1. Its function is as follows. Catalyzes the synthesis of GMP from XMP. This Helicobacter acinonychis (strain Sheeba) protein is GMP synthase [glutamine-hydrolyzing].